The chain runs to 143 residues: Putative pre-16S rRNA nuclease (143 aa).

The protein belongs to the YqgF nuclease family.

The protein localises to the cytoplasm. Could be a nuclease involved in processing of the 5'-end of pre-16S rRNA. The sequence is that of Putative pre-16S rRNA nuclease (ybeB) from Lactococcus lactis subsp. lactis (strain IL1403) (Streptococcus lactis).